We begin with the raw amino-acid sequence, 524 residues long: MGENSTTGLRGQADVSQFSDAAVEPTLSSPPTGQRQQSLPLFGEETCSISSAPSVGGGGGWPFQRQGSSRLTSRGTSLSSCSDAGSGLGALRQREDSFPEYHGVGLPLGGKYALDGTGLVLAPRVPFIFSHQLPSLTGLDEAGFSDTRKVPSTYQALAARFVHQVHQEAGNGMYPLWSAGVVLRLCLLGALFFVSVGAWLIFEDEQHVECKLNYAEKTLQEGSSRYLLKGISSAHCTREVNELKGEEISVYAEMGHFFQNDAQVLWSRNDRQLAGKIFTDPKDVRECEPLATAVVGNVTKVLHPCGALAWAVFTDKYQFLEGTPEGDNDQVPMKPIPLNQTQAVLLHSWPWQDMYKNPPAEDRAAVLDKVYFWMSPVDNDDGEDMYKTREEARAELLMDRLNYEEAGEMVENGHFIQWMQTAALGTFRKLYGSLEGPLKLPVSAHITVMYDVSSWKGKKAIVLVQKSRLGGRSLFIGIAYLSFGCLLTMLVFYMLWKKWQYRREGEEIRDLRWQTKTRGSKKTK.

Composition is skewed to polar residues over residues 1-19 (MGEN…SQFS) and 26-39 (TLSS…QQSL). Disordered regions lie at residues 1-40 (MGEN…QSLP) and 52-86 (APSV…DAGS). Over 1–181 (MGENSTTGLR…GMYPLWSAGV (181 aa)) the chain is Cytoplasmic. The span at 67–80 (GSSRLTSRGTSLSS) shows a compositional bias: low complexity. A helical transmembrane segment spans residues 182 to 202 (VLRLCLLGALFFVSVGAWLIF). Residues 203 to 473 (EDEQHVECKL…VQKSRLGGRS (271 aa)) are Extracellular-facing. 2 N-linked (GlcNAc...) asparagine glycosylation sites follow: Asn-297 and Asn-339. The chain crosses the membrane as a helical span at residues 474 to 494 (LFIGIAYLSFGCLLTMLVFYM). The Cytoplasmic segment spans residues 495–524 (LWKKWQYRREGEEIRDLRWQTKTRGSKKTK).

Belongs to the CDC50/LEM3 family. As to quaternary structure, interacts with GC; the interaction regulates guanylate cyclase GC trafficking and sensing environmental changes.

The protein resides in the membrane. In tachyzoites, required for the cellular trafficking of guanylate cyclase GC and UGO to the cell membrane. May play a role in the folding of the GC P-type ATPase-like domain to sense vacuolar changes in phosphatidic acid and pH levels which trigger parasite egress. The polypeptide is CDC50-related protein CDC50.1 (Toxoplasma gondii (strain ATCC 50853 / GT1)).